The chain runs to 368 residues: 2-deoxy-scyllo-inosose synthase (368 aa).

Residues Asp42, 72 to 75, 104 to 108, 128 to 129, 139 to 141, 150 to 151, and Gln176 contribute to the NAD(+) site; these read EEYK, GLTGN, TT, SIK, and KN. Residue Lys141 is part of the active site. Glu183 provides a ligand contact to Co(2+). Residue Glu243 is part of the active site. Co(2+) contacts are provided by His246 and His262.

It belongs to the sugar phosphate cyclases superfamily. DOI synthase family. Was isolated as a heterodimeric enzyme comprising of BtrC and a smaller polypeptide further identified as PdxT by sequence homology. Homodimer in solution. The cofactor is NAD(+). Co(2+) serves as cofactor.

The enzyme catalyses D-glucose 6-phosphate = 2-deoxy-L-scyllo-inosose + phosphate. The protein operates within metabolic intermediate biosynthesis; 2-deoxystreptamine biosynthesis; 2-deoxystreptamine from D-glucose 6-phosphate: step 1/4. It functions in the pathway antibiotic biosynthesis; butirosin biosynthesis. With respect to regulation, strongly inhibited by EDTA, zinc and Cu(2+). Its function is as follows. Catalyzes the intramolecular carbocycle formation from D-glucose-6-phosphate to 2-deoxy-scyllo-inosose (DOI). The polypeptide is 2-deoxy-scyllo-inosose synthase (btrC) (Niallia circulans (Bacillus circulans)).